The sequence spans 211 residues: Protein-methionine-sulfoxide reductase heme-binding subunit MsrQ (211 aa).

Transmembrane regions (helical) follow at residues 17–37 (LAGL…GLGA), 82–102 (LWCF…ELGV), 116–136 (PYLT…FTST), and 153–173 (FVYL…KIIS).

It belongs to the MsrQ family. As to quaternary structure, heterodimer of a catalytic subunit (MsrP) and a heme-binding subunit (MsrQ). It depends on FMN as a cofactor. The cofactor is heme b.

The protein resides in the cell inner membrane. In terms of biological role, part of the MsrPQ system that repairs oxidized periplasmic proteins containing methionine sulfoxide residues (Met-O), using respiratory chain electrons. Thus protects these proteins from oxidative-stress damage caused by reactive species of oxygen and chlorine generated by the host defense mechanisms. MsrPQ is essential for the maintenance of envelope integrity under bleach stress, rescuing a wide series of structurally unrelated periplasmic proteins from methionine oxidation, including the primary periplasmic chaperone SurA and the lipoprotein Pal. MsrQ provides electrons for reduction to the reductase catalytic subunit MsrP, using the quinone pool of the respiratory chain. This chain is Protein-methionine-sulfoxide reductase heme-binding subunit MsrQ, found in Shigella sonnei (strain Ss046).